We begin with the raw amino-acid sequence, 3750 residues long: Cubilin homolog (3750 aa).

The signal sequence occupies residues 1 to 28 (MEGAARSRLLLCWTLLAIITDTWPIAEG). Residues N51 and N123 are each glycosylated (N-linked (GlcNAc...) asparagine). Residues 154–190 (EANSCASGPCENGGTCYNTYTGFRCQCRSAFEGTKCE) form the EGF-like 1 domain. 6 disulfides stabilise this stretch: C158/C169, C163/C178, C180/C189, C196/C212, C206/C221, and C223/C232. Residues 192–233 (DVNECALYEGTDLGCQNGGQCQNHFGTYSCLCQPGWHGMHCT) form the EGF-like 2; calcium-binding domain. An EGF-like 3; calcium-binding domain is found at 282–308 (DVDECSDSAAHKPCSTSCINLPGSFTC). Residues 324 to 352 (DLDECQTNNGGCSLSPKVDCINTYGSYHC) form the EGF-like 4; calcium-binding domain. N-linked (GlcNAc...) asparagine glycosylation is present at N424. EGF-like domains are found at residues 426-463 (TTTN…PICE) and 465-503 (QPSP…RLCE). Cystine bridges form between C430–C441, C435–C451, C453–C462, C469–C480, C474–C491, C493–C502, and C509–C535. An N-linked (GlcNAc...) asparagine glycan is attached at N448. 13 CUB domains span residues 509–623 (CNGM…WNSM), 627–738 (CGGR…YSVE), 744–852 (CGGV…YRMA), 853–971 (CDYK…YRAL), 978–1095 (CGGV…YTFE), 1100–1212 (CGGH…WRIF), 1216–1331 (CGGS…YKAN), 1332–1434 (CIRN…QLDY), 1439–1550 (CMEE…YRTV), 1554–1670 (CGGK…FHES), 1671–1788 (CGQT…YMTM), 1792–1902 (CGSI…YNYE), and 1903–2001 (HHNE…WNRL). N542 and N548 each carry an N-linked (GlcNAc...) asparagine glycan. Cysteines 562 and 584 form a disulfide. Residue N609 is glycosylated (N-linked (GlcNAc...) asparagine). 6 disulfides stabilise this stretch: C627–C654, C681–C701, C744–C770, C853–C879, C913–C933, and C978–C1004. N871 carries N-linked (GlcNAc...) asparagine glycosylation. The Ca(2+) site is built by E1026, D1034, and D1080. A disulfide bridge links C1031 with C1058. C1100 and C1126 form a disulfide bridge. N1119 is a glycosylation site (N-linked (GlcNAc...) asparagine). Position 1148 (E1148) interacts with Ca(2+). An N-linked (GlcNAc...) asparagine glycan is attached at N1152. C1153 and C1175 are oxidised to a cystine. Residues D1156 and D1197 each contribute to the Ca(2+) site. C1216 and C1242 form a disulfide bridge. Residues E1264, D1272, and D1316 each contribute to the Ca(2+) site. A disulfide bond links C1269 and C1292. Residues C1332 and C1360 are joined by a disulfide bond. N-linked (GlcNAc...) asparagine glycosylation is found at N1335, N1359, N1413, and N1424. C1439 and C1465 are oxidised to a cystine. N-linked (GlcNAc...) asparagine glycosylation is present at N1491. 7 disulfide bridges follow: C1492-C1513, C1554-C1580, C1607-C1631, C1671-C1697, C1733-C1755, C1792-C1818, and C1845-C1866. N1694 carries N-linked (GlcNAc...) asparagine glycosylation. N-linked (GlcNAc...) asparagine glycosylation is found at N1908 and N2009. 2 disulfide bridges follow: C2019–C2048 and C2077–C2100. CUB domains follow at residues 2019-2139 (CGNQ…VRTA), 2140-2256 (CGSE…FRFE), 2262-2383 (DSGR…LSVA), 2385-2512 (CGGS…YTSL), and 2516-2646 (CGET…MNEV). 4 N-linked (GlcNAc...) asparagine glycosylation sites follow: N2092, N2128, N2152, and N2231. Cysteines 2140 and 2167 form a disulfide. A disulfide bond links C2324 and C2346. N-linked (GlcNAc...) asparagine glycosylation is present at N2377. Cysteines 2385 and 2416 form a disulfide. N-linked (GlcNAc...) asparagine glycosylation occurs at N2442. 2 disulfide bridges follow: C2445-C2474 and C2516-C2542. 4 N-linked (GlcNAc...) asparagine glycosylation sites follow: N2655, N2671, N2682, and N2772. 2 disulfides stabilise this stretch: C2761/C2790 and C2837/C2859. CUB domains follow at residues 2761–2895 (CGGV…IKYG), 2898–3010 (CGGK…FERN), 3011–3128 (CGGL…YTSR), 3130–3246 (CGGI…VRVM), 3249–3364 (CDEK…INAI), 3368–3512 (CGSS…VALN), 3522–3615 (LQGR…YLAS), and 3623–3736 (CGGQ…FAGV). N-linked (GlcNAc...) asparagine glycans are attached at residues N2885 and N2889. 2 disulfide bridges follow: C2898-C2921 and C2949-C2973. Residues N2960, N2965, and N2982 are each glycosylated (N-linked (GlcNAc...) asparagine). Residues C3011 and C3039 are joined by a disulfide bond. N-linked (GlcNAc...) asparagine glycans are attached at residues N3040 and N3074. 2 disulfides stabilise this stretch: C3070–C3092 and C3130–C3157. N3160 is a glycosylation site (N-linked (GlcNAc...) asparagine). 4 disulfide bridges follow: C3184/C3207, C3249/C3278, C3305/C3327, and C3368/C3402. N-linked (GlcNAc...) asparagine glycosylation is present at N3256. N3427 carries N-linked (GlcNAc...) asparagine glycosylation. A disulfide bridge links C3430 with C3475. Residues N3543, N3572, and N3645 are each glycosylated (N-linked (GlcNAc...) asparagine). Intrachain disulfides connect C3560/C3579, C3623/C3649, and C3676/C3699.

Specifically expressed in nephrocytes.

The protein localises to the cell membrane. In terms of biological role, required in the nephrocyte for normal uptake of proteins and elimination of toxins, and for maintenance of endocytic trafficking structures. May function together with Amnionless. This Drosophila melanogaster (Fruit fly) protein is Cubilin homolog.